The primary structure comprises 531 residues: MEVLPGLLRLLAALVVAERWARDTSGAESLGLWPLPFAVDISPRSLHLSPNNFFFGHSPTSKAGSSCEILQEAFRRYYDFIFGFYKWHQGSYQLCFGTELQQLQVHVESECDTFPSISSNESYVLHVKGPEALLRANTVWGALRGLETFSQLIYQDSYGTFTVNESEIIDFPRFPHRGILIDTGRHFLSVKTIFKTLDAMAFNKFNVLHWHIVDDQSFPYQSINFGVLSSKGSYSLSHVYTPNDVRMVIEYARIRGIRVMPEFDTPGHSRSWGKGQKDLLTPCYRKQVLSGTFGPINPILNTTYNFLSKFFKEISTVFPDEFIHIGGDEVDFDCWASNSEILQFMQEKGFSQISLNSNLCTVFKISNMISAMKKRPIVWQEAFDGRDKFMPGTVVQVWKIEDYKWEQSLITKAGFPVILSAPWYLDLISYGQDWKNYYEVEPQDFPGSDKERKRVLGGEACLWGEYVDATNLTPRLWPRASAVGERLWSHKDVRDIHDAYSRLTIHRCRMVRRGIAAEPLFTGYCNHEHRM.

A signal peptide spans 1–21 (MEVLPGLLRLLAALVVAERWA). An intrachain disulfide couples cysteine 67 to cysteine 111. Asparagine 120, asparagine 164, and asparagine 301 each carry an N-linked (GlcNAc...) asparagine glycan. Disulfide bonds link cysteine 283–cysteine 334 and cysteine 508–cysteine 525. The active-site Proton donor is the glutamate 329.

The protein belongs to the glycosyl hydrolase 20 family. As to quaternary structure, there are 3 forms of beta-hexosaminidase: hexosaminidase A is a heterodimer composed of one subunit alpha and one subunit beta (chain A and B); hexosaminidase B is a homodimer of two beta subunits (two chains A and B); hexosaminidase S is a homodimer of two alpha subunits. The composition of the dimer (isozyme A versus isozyme S) has a significant effect on the substrate specificity of the alpha subunit active site.

Its subcellular location is the lysosome. It localises to the cytoplasmic vesicle. The protein localises to the secretory vesicle. The protein resides in the cortical granule. The catalysed reaction is Hydrolysis of terminal non-reducing N-acetyl-D-hexosamine residues in N-acetyl-beta-D-hexosaminides.. The enzyme catalyses N-acetyl-beta-D-galactosaminyl-(1-&gt;4)-beta-D-3-sulfogalactosyl-(1-&gt;4)-beta-D-glucosyl-(1&lt;-&gt;1')-ceramide + H2O = a beta-D-3-sulfogalactosyl-(1-&gt;4)-beta-D-glucosyl-(1&lt;-&gt;1')-ceramide + N-acetyl-beta-D-galactosamine. It catalyses the reaction a ganglioside GM2 (d18:1(4E)) + H2O = a ganglioside GM3 (d18:1(4E)) + N-acetyl-beta-D-galactosamine. It carries out the reaction a ganglioside GM2 + H2O = a ganglioside GM3 + N-acetyl-beta-D-galactosamine. The catalysed reaction is beta-D-GalNAc-(1-&gt;4)-alpha-L-IdoA-(1-&gt;3)-beta-D-GalNAc-4-sulfate-(1-&gt;4)-alpha-L-IdoA-(1-&gt;3)-D-GalNAc-4-sulfate + H2O = alpha-L-IdoA-(1-&gt;3)-beta-D-GalNAc-4-sulfate-(1-&gt;4)-alpha-L-IdoA-(1-&gt;3)-D-GalNAc-4-sulfate + N-acetyl-D-galactosamine. The enzyme catalyses N-acetyl-beta-D-6-sulfogalactosaminyl-(1-&gt;4)-alpha-L-iduronyl-(1-&gt;3)-N-acetyl-D-6-sulfogalactosamine + H2O = alpha-L-iduronyl-(1-&gt;3)-N-acetyl-D-6-sulfogalactosamine + N-acetyl-D-6-sulfogalactosamine. With respect to regulation, addition of GM2A stimulates the hydrolysis of sulfated glycosphingolipid SM2 and the ganglioside GM2. Hydrolyzes the non-reducing end N-acetyl-D-hexosamine and/or sulfated N-acetyl-D-hexosamine of glycoconjugates, such as the oligosaccharide moieties from proteins and neutral glycolipids, or from certain mucopolysaccharides. The isozyme B does not hydrolyze each of these substrates, however hydrolyzes efficiently neutral oligosaccharide. Only the isozyme A is responsible for the degradation of GM2 gangliosides in the presence of GM2A. During fertilization is responsible, at least in part, for the zona block to polyspermy. Present in the cortical granules of non-activated oocytes, is exocytosed during the cortical reaction in response to oocyte activation and inactivates the sperm galactosyltransferase-binding site, accounting for the block in sperm binding to the zona pellucida. This is Beta-hexosaminidase subunit beta from Sus scrofa (Pig).